We begin with the raw amino-acid sequence, 270 residues long: uncharacterized protein (270 aa).

Disordered regions lie at residues 1-21 and 53-77; these read MSTNINEEKCLEGDDIKYEKP and PNILSSKHDGDKNKNDKKKEDAKLN. Residues 58–75 show a composition bias toward basic and acidic residues; the sequence is SKHDGDKNKNDKKKEDAK. Residues 182-270 are a coiled coil; it reads EENKSREEKH…KIEDNLNTYE (89 aa).

This is an uncharacterized protein from Plasmodium falciparum (isolate 3D7).